Here is a 698-residue protein sequence, read N- to C-terminus: Zinc finger CCCH domain-containing protein 7 (698 aa).

Positions 1-11 (MEEPSPVPPAA) are enriched in pro residues. Disordered stretches follow at residues 1-23 (MEEPSPVPPAAAPASLAAAPPTT), 56-95 (HAARPDAEVEPAAAAAIPPGGSGGLPHGDSPPPADVGGDR), 109-137 (APHETPSTSASPDAAVNPTTDPGVVPQGT), and 272-300 (GSLDGGGGFEEGEIEGDTQNLDADDSGNS). Low complexity-rich tracts occupy residues 12–21 (APASLAAAPP) and 65–74 (EPAAAAAIPP). A compositionally biased stretch (acidic residues) spans 281-300 (EEGEIEGDTQNLDADDSGNS). C3H1-type zinc fingers lie at residues 429 to 456 (PKVVKVCHFYLHGKCQQGNLCKFSHDTT), 458 to 485 (LTKSKPCTHYARGSCLKGDDCPYDHELS), and 486 to 511 (KYPCHNFMENGMCIRGDKCKFSHVIP). 2 disordered regions span residues 512-553 (TAEG…GEPA) and 607-682 (TEKH…QHEV). 2 stretches are compositionally biased toward polar residues: residues 535–548 (CQEQTSRQKTSTVY) and 665–680 (SLPTTAAVPSSVSTQH).

The polypeptide is Zinc finger CCCH domain-containing protein 7 (Oryza sativa subsp. japonica (Rice)).